Here is a 353-residue protein sequence, read N- to C-terminus: Protein pelota homolog (353 aa).

The protein belongs to the eukaryotic release factor 1 family. Pelota subfamily. Monomer. It depends on a divalent metal cation as a cofactor.

It is found in the cytoplasm. Its function is as follows. May function in recognizing stalled ribosomes, interact with stem-loop structures in stalled mRNA molecules, and effect endonucleolytic cleavage of the mRNA. May play a role in the release non-functional ribosomes and degradation of damaged mRNAs. Has endoribonuclease activity. The polypeptide is Protein pelota homolog (Methanopyrus kandleri (strain AV19 / DSM 6324 / JCM 9639 / NBRC 100938)).